Consider the following 1141-residue polypeptide: Probable ubiquitin carboxyl-terminal hydrolase 2 (1141 aa).

Thr-112 is subject to Phosphothreonine. Residue Ser-113 is modified to Phosphoserine. Position 115 is a phosphothreonine (Thr-115). The 511-residue stretch at 614-1124 (IGLENTGNLC…NPYMLTYIRK (511 aa)) folds into the USP domain. Catalysis depends on Cys-623, which acts as the Nucleophile. Thr-721 is subject to Phosphothreonine. Phosphoserine is present on Ser-722. A disordered region spans residues 748-770 (EEQAQGLEQEQGQDEAKSPAEQS). His-1076 serves as the catalytic Proton acceptor.

Belongs to the peptidase C19 family.

The catalysed reaction is Thiol-dependent hydrolysis of ester, thioester, amide, peptide and isopeptide bonds formed by the C-terminal Gly of ubiquitin (a 76-residue protein attached to proteins as an intracellular targeting signal).. The sequence is that of Probable ubiquitin carboxyl-terminal hydrolase 2 (ubp2) from Schizosaccharomyces pombe (strain 972 / ATCC 24843) (Fission yeast).